A 215-amino-acid chain; its full sequence is Outer-membrane lipoprotein LolB (215 aa).

A signal peptide spans 1–19 (MSKLRKITSLIFLTIIMVG). Cys-20 carries N-palmitoyl cysteine lipidation. Cys-20 carries the S-diacylglycerol cysteine lipid modification.

This sequence belongs to the LolB family. Monomer.

The protein localises to the cell outer membrane. Functionally, plays a critical role in the incorporation of lipoproteins in the outer membrane after they are released by the LolA protein. This is Outer-membrane lipoprotein LolB from Vibrio atlanticus (strain LGP32) (Vibrio splendidus (strain Mel32)).